The primary structure comprises 970 residues: Pentatricopeptide repeat-containing protein At1g18485 (970 aa).

PPR repeat units lie at residues 119–149 (DDVL…LRSK), 150–185 (NLFQ…DLLP), 186–220 (DHFT…GLVE), 221–251 (DVFV…MPER), 252–282 (NLVS…MMEE), 291–325 (DVAT…RLDK), 326–356 (ELVL…NNNK), 357–391 (NVVS…GEDV), 394–428 (DEVT…EFVY), 429–459 (NELV…IRSK), 460–494 (TVNS…GLLP), 495–529 (DSFT…WLER), 530–560 (DLFV…MEDK), 561–595 (SLVS…GIQL), 597–630 (GISM…LLED), 631–661 (DAFI…LKEK), 662–696 (STAS…GHNP), 697–727 (DDLT…MKSS), and 733–764 (NLKH…MSEE). The tract at residues 770–845 (WKSLLSSCRI…AGCSWIELNR (76 aa)) is type E motif. A type E(+) motif region spans residues 846–875 (KVFSFVVGERFLDGFEEIKSLWSILEMKIS). A type DYW motif region spans residues 876–970 (KMGYRPDTMS…NGVCSCGDYW (95 aa)).

Belongs to the PPR family. PCMP-H subfamily.

This is Pentatricopeptide repeat-containing protein At1g18485 (PCMP-H8) from Arabidopsis thaliana (Mouse-ear cress).